Reading from the N-terminus, the 34-residue chain is Photosystem II reaction center protein M (34 aa).

Residues 7-27 traverse the membrane as a helical segment; that stretch reads GFVASLLFILVPAIFLIVLYI.

Belongs to the PsbM family. As to quaternary structure, PSII is composed of 1 copy each of membrane proteins PsbA, PsbB, PsbC, PsbD, PsbE, PsbF, PsbH, PsbI, PsbJ, PsbK, PsbL, PsbM, PsbT, PsbX, PsbY, PsbZ, Psb30/Ycf12, peripheral proteins PsbO, CyanoQ (PsbQ), PsbU, PsbV and a large number of cofactors. It forms dimeric complexes.

The protein resides in the cellular thylakoid membrane. Functionally, one of the components of the core complex of photosystem II (PSII). PSII is a light-driven water:plastoquinone oxidoreductase that uses light energy to abstract electrons from H(2)O, generating O(2) and a proton gradient subsequently used for ATP formation. It consists of a core antenna complex that captures photons, and an electron transfer chain that converts photonic excitation into a charge separation. This subunit is found at the monomer-monomer interface. In Parasynechococcus marenigrum (strain WH8102), this protein is Photosystem II reaction center protein M.